The following is a 381-amino-acid chain: uncharacterized protein (381 aa).

The next 2 membrane-spanning stretches (helical) occupy residues Gly22–Ala42 and Leu246–Ala266.

It localises to the cell membrane. This is an uncharacterized protein from Mycobacterium tuberculosis (strain ATCC 25618 / H37Rv).